The primary structure comprises 66 residues: UPF0337 protein spyM18_1212 (66 aa).

It belongs to the UPF0337 (CsbD) family.

This Streptococcus pyogenes serotype M18 (strain MGAS8232) protein is UPF0337 protein spyM18_1212.